Here is a 417-residue protein sequence, read N- to C-terminus: Methylthioribose-1-phosphate isomerase (417 aa).

Asp285 (proton donor) is an active-site residue.

It belongs to the eIF-2B alpha/beta/delta subunits family. MtnA subfamily.

It is found in the cytoplasm. The protein localises to the nucleus. It carries out the reaction 5-(methylsulfanyl)-alpha-D-ribose 1-phosphate = 5-(methylsulfanyl)-D-ribulose 1-phosphate. The protein operates within amino-acid biosynthesis; L-methionine biosynthesis via salvage pathway; L-methionine from S-methyl-5-thio-alpha-D-ribose 1-phosphate: step 1/6. Its function is as follows. Catalyzes the interconversion of methylthioribose-1-phosphate (MTR-1-P) into methylthioribulose-1-phosphate (MTRu-1-P). This is Methylthioribose-1-phosphate isomerase from Lachancea thermotolerans (strain ATCC 56472 / CBS 6340 / NRRL Y-8284) (Yeast).